We begin with the raw amino-acid sequence, 308 residues long: MSNATKFGKVAVLLGGKSAERAVSLDSGQAVLDALLRSGVQAEAFDPQDRSVTELVNYDRAFIVLHGRGGEDGQIQGVLEWLNIPYTGTGVQGSAIGMDKVKTKQIWQGSDLPTAPYRIITKETDLDSVIAELGLPVIIKPVHEGSSVGMSKVEKAEDFAAAIEKATQHDAVVMAEKWITGREFTISFLNGQPLPVIRLQPPADVAFYDYEAKYQRNDVEYGIPCGLSETEEKKLQALCLRAFQAVGAEGWGRIDAMQDEQGNFWLLEVNTVPGMTSHSLVPKAAKAVGYSFDELCVAILEQTLEGTA.

Residues 104–301 enclose the ATP-grasp domain; that stretch reads KQIWQGSDLP…FDELCVAILE (198 aa). 130 to 185 is a binding site for ATP; it reads IAELGLPVIIKPVHEGSSVGMSKVEKAEDFAAAIEKATQHDAVVMAEKWITGREFT. 3 residues coordinate Mg(2+): D255, E268, and N270.

Belongs to the D-alanine--D-alanine ligase family. The cofactor is Mg(2+). Mn(2+) is required as a cofactor.

Its subcellular location is the cytoplasm. The catalysed reaction is 2 D-alanine + ATP = D-alanyl-D-alanine + ADP + phosphate + H(+). Its pathway is cell wall biogenesis; peptidoglycan biosynthesis. Cell wall formation. The sequence is that of D-alanine--D-alanine ligase from Acinetobacter baumannii (strain ACICU).